The primary structure comprises 331 residues: NADH-quinone oxidoreductase subunit H 2 (331 aa).

The next 8 membrane-spanning stretches (helical) occupy residues A6 to A26, I79 to P99, V120 to G140, G155 to M175, P193 to I213, L242 to F262, L271 to V291, and V310 to G330.

The protein belongs to the complex I subunit 1 family. In terms of assembly, NDH-1 is composed of 14 different subunits. Subunits NuoA, H, J, K, L, M, N constitute the membrane sector of the complex.

Its subcellular location is the cell inner membrane. It carries out the reaction a quinone + NADH + 5 H(+)(in) = a quinol + NAD(+) + 4 H(+)(out). Its function is as follows. NDH-1 shuttles electrons from NADH, via FMN and iron-sulfur (Fe-S) centers, to quinones in the respiratory chain. The immediate electron acceptor for the enzyme in this species is believed to be ubiquinone. Couples the redox reaction to proton translocation (for every two electrons transferred, four hydrogen ions are translocated across the cytoplasmic membrane), and thus conserves the redox energy in a proton gradient. This subunit may bind ubiquinone. In Syntrophobacter fumaroxidans (strain DSM 10017 / MPOB), this protein is NADH-quinone oxidoreductase subunit H 2.